The following is a 326-amino-acid chain: MSKSERRVFLLDFEKPLYELEEKINQIRELAEEKNVDVSEQLSQLESRAEQLRQEIFSNLNPSQRLQLARHPRRPSTLDYIQAIADDWFEMHGDRGGYDDPALVGGVARLGTRPVVIMGHQKGRDTKDNVARNFGMAAPNGYRKALRLMEHADRFGMPIITFIDTPGAWAGIDAEKLGQGEAIAVNLREMFRLDVPILCTVIGEGGSGGALGIGVGDRVLMLENAVYTVATPEACAAILWKDAKKSDKAAIALKITADDLAKLQIIDGIIPEPKGAAHANPLGAAAKLKEALLFHLNTLAQLTPQERKQLRYDKFRHLGQFLETAV.

Positions 44–298 constitute a CoA carboxyltransferase C-terminal domain; it reads QLESRAEQLR…KEALLFHLNT (255 aa).

Belongs to the AccA family. In terms of assembly, acetyl-CoA carboxylase is a heterohexamer composed of biotin carboxyl carrier protein (AccB), biotin carboxylase (AccC) and two subunits each of ACCase subunit alpha (AccA) and ACCase subunit beta (AccD).

It is found in the cytoplasm. It catalyses the reaction N(6)-carboxybiotinyl-L-lysyl-[protein] + acetyl-CoA = N(6)-biotinyl-L-lysyl-[protein] + malonyl-CoA. The protein operates within lipid metabolism; malonyl-CoA biosynthesis; malonyl-CoA from acetyl-CoA: step 1/1. Functionally, component of the acetyl coenzyme A carboxylase (ACC) complex. First, biotin carboxylase catalyzes the carboxylation of biotin on its carrier protein (BCCP) and then the CO(2) group is transferred by the carboxyltransferase to acetyl-CoA to form malonyl-CoA. This is Acetyl-coenzyme A carboxylase carboxyl transferase subunit alpha from Synechocystis sp. (strain ATCC 27184 / PCC 6803 / Kazusa).